A 454-amino-acid polypeptide reads, in one-letter code: Methylenetetrahydrofolate--tRNA-(uracil-5-)-methyltransferase TrmFO (454 aa).

9-14 serves as a coordination point for FAD; sequence GAGLAG. The tract at residues 432–454 is disordered; it reads LERVSPPSRETGEPTGAEQVDLA.

This sequence belongs to the MnmG family. TrmFO subfamily. FAD is required as a cofactor.

The protein localises to the cytoplasm. The enzyme catalyses uridine(54) in tRNA + (6R)-5,10-methylene-5,6,7,8-tetrahydrofolate + NADH + H(+) = 5-methyluridine(54) in tRNA + (6S)-5,6,7,8-tetrahydrofolate + NAD(+). The catalysed reaction is uridine(54) in tRNA + (6R)-5,10-methylene-5,6,7,8-tetrahydrofolate + NADPH + H(+) = 5-methyluridine(54) in tRNA + (6S)-5,6,7,8-tetrahydrofolate + NADP(+). Catalyzes the folate-dependent formation of 5-methyl-uridine at position 54 (M-5-U54) in all tRNAs. The chain is Methylenetetrahydrofolate--tRNA-(uracil-5-)-methyltransferase TrmFO from Pelobacter propionicus (strain DSM 2379 / NBRC 103807 / OttBd1).